The primary structure comprises 227 residues: Phosphoglycolate phosphatase (227 aa).

Residue Asp11 is the Nucleophile of the active site. 3 residues coordinate Mg(2+): Asp11, Asp13, and Asp176.

It belongs to the HAD-like hydrolase superfamily. CbbY/CbbZ/Gph/YieH family. Requires Mg(2+) as cofactor.

It catalyses the reaction 2-phosphoglycolate + H2O = glycolate + phosphate. The protein operates within organic acid metabolism; glycolate biosynthesis; glycolate from 2-phosphoglycolate: step 1/1. Functionally, specifically catalyzes the dephosphorylation of 2-phosphoglycolate. Is involved in the dissimilation of the intracellular 2-phosphoglycolate formed during the DNA repair of 3'-phosphoglycolate ends, a major class of DNA lesions induced by oxidative stress. The polypeptide is Phosphoglycolate phosphatase (Aliivibrio fischeri (strain ATCC 700601 / ES114) (Vibrio fischeri)).